Here is a 199-residue protein sequence, read N- to C-terminus: Pneumococcal vaccine antigen A homolog (199 aa).

It localises to the cell surface. The chain is Pneumococcal vaccine antigen A homolog (pvaA) from Streptococcus pyogenes serotype M3 (strain ATCC BAA-595 / MGAS315).